The primary structure comprises 284 residues: uncharacterized protein (284 aa).

An N-terminal signal peptide occupies residues 1–23 (MKRGCAIAVMICGLITSVSAASA).

It belongs to the surface antigen msp4 family.

This is an uncharacterized protein from Brucella suis biovar 1 (strain 1330).